We begin with the raw amino-acid sequence, 190 residues long: 6,7-dimethyl-8-ribityllumazine synthase (190 aa).

5-amino-6-(D-ribitylamino)uracil-binding positions include Phe23, 61-63 (SFE), and 85-87 (AVI). (2S)-2-hydroxy-3-oxobutyl phosphate is bound at residue 90–91 (QT). The Proton donor role is filled by His93. A 5-amino-6-(D-ribitylamino)uracil-binding site is contributed by Phe118. Residue Arg132 participates in (2S)-2-hydroxy-3-oxobutyl phosphate binding.

The protein belongs to the DMRL synthase family.

It catalyses the reaction (2S)-2-hydroxy-3-oxobutyl phosphate + 5-amino-6-(D-ribitylamino)uracil = 6,7-dimethyl-8-(1-D-ribityl)lumazine + phosphate + 2 H2O + H(+). The protein operates within cofactor biosynthesis; riboflavin biosynthesis; riboflavin from 2-hydroxy-3-oxobutyl phosphate and 5-amino-6-(D-ribitylamino)uracil: step 1/2. Its function is as follows. Catalyzes the formation of 6,7-dimethyl-8-ribityllumazine by condensation of 5-amino-6-(D-ribitylamino)uracil with 3,4-dihydroxy-2-butanone 4-phosphate. This is the penultimate step in the biosynthesis of riboflavin. This Trichormus variabilis (strain ATCC 29413 / PCC 7937) (Anabaena variabilis) protein is 6,7-dimethyl-8-ribityllumazine synthase.